Consider the following 60-residue polypeptide: Large ribosomal subunit protein uL30 (60 aa).

It belongs to the universal ribosomal protein uL30 family. In terms of assembly, part of the 50S ribosomal subunit.

This is Large ribosomal subunit protein uL30 from Azoarcus sp. (strain BH72).